Reading from the N-terminus, the 710-residue chain is Early transcription factor 82 kDa subunit (710 aa).

Belongs to the poxviridae VETF large subunit family. In terms of assembly, heterodimer of a 70 kDa and a 82 kDa subunit. Part of the early transcription complex composed of ETF, RAP94/OPG109, and the DNA-directed RNA polymerase.

The protein localises to the virion. Functionally, acts with RNA polymerase to initiate transcription from early gene promoters. Is recruited by the RPO-associated protein of 94 kDa RAP94/OPG109 to form the early transcription complex, which also contains the core RNA polymerase. ETF heterodimer binds to early gene promoters. The protein is Early transcription factor 82 kDa subunit (OPG133) of Bos taurus (Bovine).